The chain runs to 1759 residues: Putative ATP-dependent RNA helicase TDRD12 (1759 aa).

The Tudor 1 domain occupies 74–153 (FQNLEQVWFS…KLSNTETRAV (80 aa)). Low complexity predominate over residues 480-495 (NSAASESSTKSSMDSS). The tract at residues 480–506 (NSAASESSTKSSMDSSRISDEDDLSSD) is disordered. Positions 611–789 (WGTILRGLST…DFLEPIVLKA (179 aa)) constitute a Helicase ATP-binding domain. 624 to 631 (SPPRSGKT) is an ATP binding site. The Helicase C-terminal domain occupies 823–980 (NVLQFIDSVQ…NVPKILDEVS (158 aa)). The Tudor 2 domain occupies 1335-1394 (GSNVGDIVLAKFPDDSMYERARIDHIYSEDKVKCFFVDQGDWRDVSTNDLATITENFITQ). The CS domain maps to 1618-1704 (LSKPKICWSQ…LMCRNWLALT (87 aa)).

As to quaternary structure, interacts (via Tudor domain 2) with Siwi. Component of the PET complex, at least composed of EXD1, SIWI, TDRD12 and piRNAs. In terms of tissue distribution, expressed in the yolk cells. Not detected in yolk granules.

Its subcellular location is the chromosome. It is found in the cytoplasm. The protein resides in the cytosol. The protein localises to the nucleus membrane. The enzyme catalyses ATP + H2O = ADP + phosphate + H(+). In terms of biological role, probable ATP-binding RNA helicase required during spermatogenesis to repress transposable elements and preventing their mobilization, which is essential for the germline integrity. Acts via the piRNA metabolic process, which mediates the repression of transposable elements during meiosis by forming complexes composed of piRNAs and Piwi proteins and governs the methylation and subsequent repression of transposons. This chain is Putative ATP-dependent RNA helicase TDRD12 (TDRD12), found in Bombyx mori (Silk moth).